The following is a 253-amino-acid chain: Uridine phosphorylase (253 aa).

It belongs to the PNP/UDP phosphorylase family. As to quaternary structure, homohexamer.

It localises to the cytoplasm. It carries out the reaction uridine + phosphate = alpha-D-ribose 1-phosphate + uracil. The protein operates within pyrimidine metabolism; UMP biosynthesis via salvage pathway; uracil from uridine (phosphorylase route): step 1/1. Catalyzes the reversible phosphorylytic cleavage of uridine to uracil and ribose-1-phosphate. Shows weak activity towards deoxyuridine and thymidine. The produced molecules are then utilized as carbon and energy sources or in the rescue of pyrimidine bases for nucleotide synthesis. In Escherichia coli (strain K12), this protein is Uridine phosphorylase.